The primary structure comprises 63 residues: Conotoxin Lt11.1 (63 aa).

A signal peptide spans 1–23 (MMFRLTSVLLVIVLLNLVVLTNA). 4 cysteine pairs are disulfide-bonded: Cys-24-Cys-34, Cys-28-Cys-39, Cys-33-Cys-42, and Cys-38-Cys-47. A propeptide spanning residues 53–63 (ALLQRLLGHQR) is cleaved from the precursor.

Belongs to the conotoxin I2 superfamily. Expressed by the venom duct.

It localises to the secreted. In Conus litteratus (Lettered cone), this protein is Conotoxin Lt11.1.